The sequence spans 537 residues: CTP synthase (537 aa).

The tract at residues 1–265 is amidoligase domain; that stretch reads MVHFIFVTGG…DNKVLKFFNI (265 aa). Serine 13 lines the CTP pocket. Serine 13 contributes to the UTP binding site. ATP contacts are provided by residues 14 to 19 and aspartate 71; that span reads SLGKGL. Mg(2+) is bound by residues aspartate 71 and glutamate 139. Residues 146-148 and lysine 222 contribute to the CTP site; that span reads DIE. UTP is bound at residue lysine 222. In terms of domain architecture, Glutamine amidotransferase type-1 spans 290–536; the sequence is RIAIIAKYHK…IKAAIEYNKC (247 aa). Glycine 352 lines the L-glutamine pocket. The active-site Nucleophile; for glutamine hydrolysis is cysteine 379. Residues 380 to 383, glutamate 403, and arginine 464 each bind L-glutamine; that span reads FGMQ. Active-site residues include histidine 509 and glutamate 511.

This sequence belongs to the CTP synthase family. As to quaternary structure, homotetramer.

It carries out the reaction UTP + L-glutamine + ATP + H2O = CTP + L-glutamate + ADP + phosphate + 2 H(+). The catalysed reaction is L-glutamine + H2O = L-glutamate + NH4(+). It catalyses the reaction UTP + NH4(+) + ATP = CTP + ADP + phosphate + 2 H(+). It participates in pyrimidine metabolism; CTP biosynthesis via de novo pathway; CTP from UDP: step 2/2. Its activity is regulated as follows. Allosterically activated by GTP, when glutamine is the substrate; GTP has no effect on the reaction when ammonia is the substrate. The allosteric effector GTP functions by stabilizing the protein conformation that binds the tetrahedral intermediate(s) formed during glutamine hydrolysis. Inhibited by the product CTP, via allosteric rather than competitive inhibition. Functionally, catalyzes the ATP-dependent amination of UTP to CTP with either L-glutamine or ammonia as the source of nitrogen. Regulates intracellular CTP levels through interactions with the four ribonucleotide triphosphates. The sequence is that of CTP synthase from Rickettsia rickettsii (strain Iowa).